The following is a 168-amino-acid chain: Plastocyanin, chloroplastic (168 aa).

Residues M1–A69 constitute a chloroplast transit peptide. The Plastocyanin-like domain occupies V70–N168. Residues H106, C153, H156, and M161 each coordinate Cu cation.

The protein belongs to the plastocyanin family. Requires Cu(2+) as cofactor.

The protein resides in the plastid. It localises to the chloroplast thylakoid membrane. Participates in electron transfer between P700 and the cytochrome b6-f complex in photosystem I. This Pisum sativum (Garden pea) protein is Plastocyanin, chloroplastic (PETE).